The following is a 348-amino-acid chain: Phenylalanine--tRNA ligase alpha subunit (348 aa).

Glu259 contributes to the Mg(2+) binding site.

This sequence belongs to the class-II aminoacyl-tRNA synthetase family. Phe-tRNA synthetase alpha subunit type 1 subfamily. In terms of assembly, tetramer of two alpha and two beta subunits. Requires Mg(2+) as cofactor.

It is found in the cytoplasm. It carries out the reaction tRNA(Phe) + L-phenylalanine + ATP = L-phenylalanyl-tRNA(Phe) + AMP + diphosphate + H(+). The chain is Phenylalanine--tRNA ligase alpha subunit from Lacticaseibacillus casei (strain BL23) (Lactobacillus casei).